Consider the following 65-residue polypeptide: Large ribosomal subunit protein bL33c (65 aa).

Belongs to the bacterial ribosomal protein bL33 family.

The protein localises to the plastid. It localises to the chloroplast. The protein is Large ribosomal subunit protein bL33c of Psilotum nudum (Whisk fern).